Reading from the N-terminus, the 826-residue chain is Capsid-associated protein Vp91 (826 aa).

An N-terminal signal peptide occupies residues 1-18 (MSDVVLLVLAIIFIIIFV). A C2HC BV-type zinc finger spans residues 147-196 (CVPINPCDTRAPGLYAMDEHLLDALVHSQHLDKDYTINAHLQHPTLYLRC). 2 cysteine pairs are disulfide-bonded: cysteine 207–cysteine 220 and cysteine 260–cysteine 273. Residue asparagine 210 is glycosylated (N-linked (GlcNAc...) asparagine; by host). The 59-residue stretch at 223–281 (NELCQGRPDGYVLDYFPETLLVNEFVECYESKHVVKQCPEQHVFDRQLMTCVQAHPCAF) folds into the Chitin-binding type-2 domain. 6 N-linked (GlcNAc...) asparagine; by host glycosylation sites follow: asparagine 333, asparagine 371, asparagine 413, asparagine 510, asparagine 520, and asparagine 609. The disordered stretch occupies residues 651–679 (GDGDHWGPDLPPPVQPDSEPDESEPEPEV). Residues 668–677 (SEPDESEPEP) show a composition bias toward acidic residues. Asparagine 722 carries N-linked (GlcNAc...) asparagine; by host glycosylation.

Its subcellular location is the virion. Functionally, probable capsid-associated protein. The sequence is that of Capsid-associated protein Vp91 from Epiphyas postvittana nucleopolyhedrovirus (EppoMNPV).